Reading from the N-terminus, the 245-residue chain is Acetylglutamate kinase (245 aa).

Substrate is bound by residues 41–42 (GG), Arg63, and Asn156.

It belongs to the acetylglutamate kinase family. ArgB subfamily.

It localises to the cytoplasm. It catalyses the reaction N-acetyl-L-glutamate + ATP = N-acetyl-L-glutamyl 5-phosphate + ADP. It participates in amino-acid biosynthesis; L-arginine biosynthesis; N(2)-acetyl-L-ornithine from L-glutamate: step 2/4. Catalyzes the ATP-dependent phosphorylation of N-acetyl-L-glutamate. This chain is Acetylglutamate kinase, found in Staphylococcus epidermidis (strain ATCC 35984 / DSM 28319 / BCRC 17069 / CCUG 31568 / BM 3577 / RP62A).